Here is a 350-residue protein sequence, read N- to C-terminus: Phosphotriesterase-related protein (350 aa).

A divalent metal cation contacts are provided by His22, His24, Glu169, His201, His230, and Asp298.

Belongs to the metallo-dependent hydrolases superfamily. Phosphotriesterase family. A divalent metal cation serves as cofactor.

This Drosophila mojavensis (Fruit fly) protein is Phosphotriesterase-related protein.